A 672-amino-acid chain; its full sequence is ABC transporter G family member 21 (672 aa).

A compositionally biased stretch (polar residues) spans 1–35 (MMPPNEQESSFPKTPSANRHETSPVQENRFSSPSH). The segment at 1–59 (MMPPNEQESSFPKTPSANRHETSPVQENRFSSPSHVNPCLDDDNDHDGPSHQSRQSSVL) is disordered. The span at 50–59 (SHQSRQSSVL) shows a compositional bias: low complexity. One can recognise an ABC transporter domain in the interval 68–322 (LKFEELTYSI…FGSIGYQPGS (255 aa)). Position 117–124 (117–124 (GPSGSGKT)) interacts with ATP. In terms of domain architecture, ABC transmembrane type-2 spans 411–617 (MQFSVLLKRG…CYKLLVGVQY (207 aa)). A run of 6 helical transmembrane segments spans residues 429-449 (FSGL…LLWW), 460-480 (VGLL…NAIF), 512-532 (LPME…MGGL), 543-563 (LMIV…LGAI), 576-596 (VLML…PGFI), and 649-669 (WDVL…YLAL).

The protein belongs to the ABC transporter superfamily. ABCG family. Eye pigment precursor importer (TC 3.A.1.204) subfamily.

Its subcellular location is the membrane. This chain is ABC transporter G family member 21 (ABCG21), found in Arabidopsis thaliana (Mouse-ear cress).